The following is a 280-amino-acid chain: Large ribosomal subunit protein uL2 (280 aa).

Disordered stretches follow at residues 33–55 (LTEG…RRRG) and 199–266 (DNSN…KASQ). Residues 209-219 (GRMRHKGKRPS) show a composition bias toward basic residues.

The protein belongs to the universal ribosomal protein uL2 family. In terms of assembly, part of the 50S ribosomal subunit. Forms a bridge to the 30S subunit in the 70S ribosome.

In terms of biological role, one of the primary rRNA binding proteins. Required for association of the 30S and 50S subunits to form the 70S ribosome, for tRNA binding and peptide bond formation. It has been suggested to have peptidyltransferase activity; this is somewhat controversial. Makes several contacts with the 16S rRNA in the 70S ribosome. The chain is Large ribosomal subunit protein uL2 from Ruegeria sp. (strain TM1040) (Silicibacter sp.).